The chain runs to 456 residues: uncharacterized protein (456 aa).

Residues 5–63 (LVKKGQQISLKIKRLGINGEGIGYYKKLIIFVPGALPKEEVTATITNVTPKFAEGTLQS) enclose the TRAM domain. Positions 76, 82, 85, and 165 each coordinate [4Fe-4S] cluster. S-adenosyl-L-methionine-binding residues include Gln-289, Tyr-318, Asp-339, and Asp-387. Cys-414 (nucleophile) is an active-site residue.

The protein belongs to the class I-like SAM-binding methyltransferase superfamily. RNA M5U methyltransferase family.

This is an uncharacterized protein from Enterococcus faecalis (strain ATCC 700802 / V583).